Consider the following 467-residue polypeptide: Argininosuccinate lyase (467 aa).

It belongs to the lyase 1 family. Argininosuccinate lyase subfamily.

The protein resides in the cytoplasm. It catalyses the reaction 2-(N(omega)-L-arginino)succinate = fumarate + L-arginine. It functions in the pathway amino-acid biosynthesis; L-arginine biosynthesis; L-arginine from L-ornithine and carbamoyl phosphate: step 3/3. This Rhizobium johnstonii (strain DSM 114642 / LMG 32736 / 3841) (Rhizobium leguminosarum bv. viciae) protein is Argininosuccinate lyase.